The primary structure comprises 368 residues: Putative flavoprotein monooxygenase (368 aa).

FAD is bound by residues alanine 14, glutamate 34, serine 41, 52–53, valine 110, alanine 307, and isoleucine 319; that span reads IT.

FAD is required as a cofactor.

Its function is as follows. FAD-binding protein that may have monooxygenase activity using NADPH and/or NADH as an electron donor. The chain is Putative flavoprotein monooxygenase from Staphylococcus aureus (strain Mu50 / ATCC 700699).